The primary structure comprises 80 residues: Type VII secretion system accessory factor EsaB (80 aa).

Belongs to the EsaB family.

The protein resides in the cytoplasm. Functionally, seems to regulate secreted factors that contribute to the establishment of persistent infections in the host. The sequence is that of Type VII secretion system accessory factor EsaB from Staphylococcus aureus (strain COL).